Consider the following 210-residue polypeptide: MSAALLSLVQWLSPAFPTGAFAYSHGLEWAISEGEVRDAASARRWIADVLAFGAGRTDAILLAHALRGHDPEALADLARALAPSAERLRETEEQGAAFAATVAALTGRDLPPRPLPVALGQAAAPLGLPVAEVLALMLHAFAANLVSAAVRFVPLGQTEGQAALAALHPLIEEIAAESAEAPLDAIGSAALRGDLAAMRHETQEVRIFKT.

It belongs to the UreF family. UreD, UreF and UreG form a complex that acts as a GTP-hydrolysis-dependent molecular chaperone, activating the urease apoprotein by helping to assemble the nickel containing metallocenter of UreC. The UreE protein probably delivers the nickel.

Its subcellular location is the cytoplasm. Functionally, required for maturation of urease via the functional incorporation of the urease nickel metallocenter. The chain is Urease accessory protein UreF from Cereibacter sphaeroides (strain KD131 / KCTC 12085) (Rhodobacter sphaeroides).